The primary structure comprises 210 residues: Thymidylate kinase (210 aa).

An ATP-binding site is contributed by 9 to 16 (GLEGAGKS).

The protein belongs to the thymidylate kinase family.

It carries out the reaction dTMP + ATP = dTDP + ADP. Phosphorylation of dTMP to form dTDP in both de novo and salvage pathways of dTTP synthesis. The polypeptide is Thymidylate kinase (Aliivibrio fischeri (strain MJ11) (Vibrio fischeri)).